Here is a 378-residue protein sequence, read N- to C-terminus: Protein-glutamate methylesterase/protein-glutamine glutaminase 2 (378 aa).

One can recognise a Response regulatory domain in the interval 4–121 (KVLVVDDSGF…SRNPEKVKQL (118 aa)). Asp55 carries the post-translational modification 4-aspartylphosphate. Positions 141-188 (APAPAAAPTPAPIPAAAPSSFGSHSAPARPAPAPAPTRAPAASASSPA) are disordered. Residues 145–155 (AAAPTPAPIPA) are compositionally biased toward pro residues. Composition is skewed to low complexity over residues 156–168 (AAPSSFGSHSAPA) and 178–188 (RAPAASASSPA). The region spanning 187 to 378 (PAPKRKNYKL…IGKHIVEACV (192 aa)) is the CheB-type methylesterase domain. Residues Ser202, His229, and Asp322 contribute to the active site.

Belongs to the CheB family. In terms of processing, phosphorylated by CheA. Phosphorylation of the N-terminal regulatory domain activates the methylesterase activity.

The protein localises to the cytoplasm. It carries out the reaction [protein]-L-glutamate 5-O-methyl ester + H2O = L-glutamyl-[protein] + methanol + H(+). The catalysed reaction is L-glutaminyl-[protein] + H2O = L-glutamyl-[protein] + NH4(+). In terms of biological role, involved in chemotaxis. Part of a chemotaxis signal transduction system that modulates chemotaxis in response to various stimuli. Catalyzes the demethylation of specific methylglutamate residues introduced into the chemoreceptors (methyl-accepting chemotaxis proteins or MCP) by CheR. Also mediates the irreversible deamidation of specific glutamine residues to glutamic acid. This Pseudomonas fluorescens (strain Pf0-1) protein is Protein-glutamate methylesterase/protein-glutamine glutaminase 2.